A 276-amino-acid polypeptide reads, in one-letter code: Diaminopimelate epimerase (276 aa).

The substrate site is built by Asn-13, Gln-46, and Asn-66. The Proton donor role is filled by Cys-75. Residues 76–77, Asn-159, Asn-192, and 210–211 contribute to the substrate site; these read GN and ER. The active-site Proton acceptor is Cys-219. Residue 220–221 participates in substrate binding; sequence GT.

Belongs to the diaminopimelate epimerase family. Homodimer.

It localises to the cytoplasm. The catalysed reaction is (2S,6S)-2,6-diaminopimelate = meso-2,6-diaminopimelate. The protein operates within amino-acid biosynthesis; L-lysine biosynthesis via DAP pathway; DL-2,6-diaminopimelate from LL-2,6-diaminopimelate: step 1/1. Catalyzes the stereoinversion of LL-2,6-diaminopimelate (L,L-DAP) to meso-diaminopimelate (meso-DAP), a precursor of L-lysine and an essential component of the bacterial peptidoglycan. The polypeptide is Diaminopimelate epimerase (Chromobacterium violaceum (strain ATCC 12472 / DSM 30191 / JCM 1249 / CCUG 213 / NBRC 12614 / NCIMB 9131 / NCTC 9757 / MK)).